The sequence spans 267 residues: MRRIAVVGAAGRMGKTLIEAVQQAPGAGLTAAIDRPDSTLVGADAGELAALGRIGVPLSGDLAKVADEFDVLIDFTHPSVTLKNLAFCRKAGKAMIIGTTGFSAEEKQRLVEAGKDIPIVFAANFSIGVNLCLKLLDTAARVLGDEVDIEITEAHHRHKVDAPSGTALRMGEVVASALGRDLEKVAVYGREGQTGARDRQTIGFATIRAGDVVGDHTVLFAADGERVEITHKASSRMTFAKGAVRAAMWLDGKAPGLYDMQDVLGLH.

NAD(+) is bound by residues 8 to 13 (GAAGRM) and Asp34. Arg35 contacts NADP(+). Residues 98–100 (GTT) and 122–125 (AANF) each bind NAD(+). Catalysis depends on His155, which acts as the Proton donor/acceptor. His156 provides a ligand contact to (S)-2,3,4,5-tetrahydrodipicolinate. Catalysis depends on Lys159, which acts as the Proton donor. 165-166 (GT) serves as a coordination point for (S)-2,3,4,5-tetrahydrodipicolinate.

It belongs to the DapB family.

Its subcellular location is the cytoplasm. It carries out the reaction (S)-2,3,4,5-tetrahydrodipicolinate + NAD(+) + H2O = (2S,4S)-4-hydroxy-2,3,4,5-tetrahydrodipicolinate + NADH + H(+). The catalysed reaction is (S)-2,3,4,5-tetrahydrodipicolinate + NADP(+) + H2O = (2S,4S)-4-hydroxy-2,3,4,5-tetrahydrodipicolinate + NADPH + H(+). The protein operates within amino-acid biosynthesis; L-lysine biosynthesis via DAP pathway; (S)-tetrahydrodipicolinate from L-aspartate: step 4/4. Catalyzes the conversion of 4-hydroxy-tetrahydrodipicolinate (HTPA) to tetrahydrodipicolinate. The chain is 4-hydroxy-tetrahydrodipicolinate reductase from Pseudomonas amygdali pv. tabaci (Pseudomonas syringae pv. tabaci).